A 256-amino-acid chain; its full sequence is Phosphoribosylaminoimidazole-succinocarboxamide synthase (256 aa).

The segment at 234–256 (KPQKPAAAKKKAPVSKKTVKRTR) is disordered. Residues 240 to 256 (AAKKKAPVSKKTVKRTR) show a composition bias toward basic residues.

Belongs to the SAICAR synthetase family.

It carries out the reaction 5-amino-1-(5-phospho-D-ribosyl)imidazole-4-carboxylate + L-aspartate + ATP = (2S)-2-[5-amino-1-(5-phospho-beta-D-ribosyl)imidazole-4-carboxamido]succinate + ADP + phosphate + 2 H(+). The protein operates within purine metabolism; IMP biosynthesis via de novo pathway; 5-amino-1-(5-phospho-D-ribosyl)imidazole-4-carboxamide from 5-amino-1-(5-phospho-D-ribosyl)imidazole-4-carboxylate: step 1/2. In Methanoregula boonei (strain DSM 21154 / JCM 14090 / 6A8), this protein is Phosphoribosylaminoimidazole-succinocarboxamide synthase.